The sequence spans 456 residues: ATP-dependent protease ATPase subunit HslU (456 aa).

Residues valine 18, 60 to 65 (GVGKTE), aspartate 269, glutamate 334, and arginine 406 each bind ATP.

Belongs to the ClpX chaperone family. HslU subfamily. A double ring-shaped homohexamer of HslV is capped on each side by a ring-shaped HslU homohexamer. The assembly of the HslU/HslV complex is dependent on binding of ATP.

It is found in the cytoplasm. ATPase subunit of a proteasome-like degradation complex; this subunit has chaperone activity. The binding of ATP and its subsequent hydrolysis by HslU are essential for unfolding of protein substrates subsequently hydrolyzed by HslV. HslU recognizes the N-terminal part of its protein substrates and unfolds these before they are guided to HslV for hydrolysis. The sequence is that of ATP-dependent protease ATPase subunit HslU from Desulfosudis oleivorans (strain DSM 6200 / JCM 39069 / Hxd3) (Desulfococcus oleovorans).